The following is a 127-amino-acid chain: Aspartate 1-decarboxylase (127 aa).

Ser25 (schiff-base intermediate with substrate; via pyruvic acid) is an active-site residue. Ser25 carries the pyruvic acid (Ser) modification. A substrate-binding site is contributed by Thr57. Tyr58 functions as the Proton donor in the catalytic mechanism. 73–75 lines the substrate pocket; it reads GAA.

Belongs to the PanD family. As to quaternary structure, heterooctamer of four alpha and four beta subunits. Pyruvate is required as a cofactor. In terms of processing, is synthesized initially as an inactive proenzyme, which is activated by self-cleavage at a specific serine bond to produce a beta-subunit with a hydroxyl group at its C-terminus and an alpha-subunit with a pyruvoyl group at its N-terminus.

Its subcellular location is the cytoplasm. It carries out the reaction L-aspartate + H(+) = beta-alanine + CO2. Its pathway is cofactor biosynthesis; (R)-pantothenate biosynthesis; beta-alanine from L-aspartate: step 1/1. Functionally, catalyzes the pyruvoyl-dependent decarboxylation of aspartate to produce beta-alanine. In Bacillus cereus (strain ATCC 10987 / NRS 248), this protein is Aspartate 1-decarboxylase.